A 152-amino-acid polypeptide reads, in one-letter code: Large ribosomal subunit protein bL34c (152 aa).

The transit peptide at 1 to 91 directs the protein to the chloroplast; the sequence is MATLSLLSTG…DRCRRFVVRA (91 aa).

As to quaternary structure, component of the chloroplast large ribosomal subunit (LSU). Mature 70S chloroplast ribosomes of higher plants consist of a small (30S) and a large (50S) subunit. The 30S small subunit contains 1 molecule of ribosomal RNA (16S rRNA) and 24 different proteins. The 50S large subunit contains 3 rRNA molecules (23S, 5S and 4.5S rRNA) and 33 different proteins.

The protein resides in the plastid. It localises to the chloroplast. In terms of biological role, component of the chloroplast ribosome (chloro-ribosome), a dedicated translation machinery responsible for the synthesis of chloroplast genome-encoded proteins, including proteins of the transcription and translation machinery and components of the photosynthetic apparatus. This chain is Large ribosomal subunit protein bL34c (RPL34), found in Spinacia oleracea (Spinach).